Here is a 361-residue protein sequence, read N- to C-terminus: 5-formaminoimidazole-4-carboxamide-1-(beta)-D-ribofuranosyl 5'-monophosphate synthetase (361 aa).

5-amino-1-(5-phospho-beta-D-ribosyl)imidazole-4-carboxamide is bound by residues H27 and S94. The region spanning 116-348 (RAILRWEAER…MGQRIAKEIK (233 aa)) is the ATP-grasp domain. Residues 146-208 (PDEI…ANYC) and E230 each bind ATP. 5-amino-1-(5-phospho-beta-D-ribosyl)imidazole-4-carboxamide is bound at residue N258. 2 residues coordinate Mg(2+): Q297 and E310.

It belongs to the phosphohexose mutase family. Mg(2+) is required as a cofactor. It depends on Mn(2+) as a cofactor.

The catalysed reaction is 5-amino-1-(5-phospho-beta-D-ribosyl)imidazole-4-carboxamide + formate + ATP = 5-formamido-1-(5-phospho-D-ribosyl)imidazole-4-carboxamide + ADP + phosphate. It functions in the pathway purine metabolism; IMP biosynthesis via de novo pathway; 5-formamido-1-(5-phospho-D-ribosyl)imidazole-4-carboxamide from 5-amino-1-(5-phospho-D-ribosyl)imidazole-4-carboxamide (formate route): step 1/1. Catalyzes the ATP- and formate-dependent formylation of 5-aminoimidazole-4-carboxamide-1-beta-d-ribofuranosyl 5'-monophosphate (AICAR) to 5-formaminoimidazole-4-carboxamide-1-beta-d-ribofuranosyl 5'-monophosphate (FAICAR) in the absence of folates. The sequence is that of 5-formaminoimidazole-4-carboxamide-1-(beta)-D-ribofuranosyl 5'-monophosphate synthetase from Methanococcus vannielii (strain ATCC 35089 / DSM 1224 / JCM 13029 / OCM 148 / SB).